A 91-amino-acid chain; its full sequence is MGLQEEFEEFAEKAKTLPDTISNEDKLLLYGLYKQATVGPVTTGRPGIFNLKDRYKWDAWKAVEGKSKEEAMADYITKVKQLLEEASASTS.

The 86-residue stretch at 3 to 88 folds into the ACB domain; sequence LQEEFEEFAE…VKQLLEEASA (86 aa). An acyl-CoA contacts are provided by residues K15, 30–34, K52, K56, and Y75; that span reads YGLYK.

Belongs to the ACBP family. In terms of tissue distribution, highly expressed in leaves. Expressed at low levels in roots and seeds.

The protein localises to the cytoplasm. The protein resides in the cytosol. Binds medium- and long-chain acyl-CoA esters with high affinity. Can interact in vitro with linolenoyl-CoA. Binds palmitoyl-CoA and linoleoyl-CoA in vitro. Binds phosphatidic acid (PA) and phosphatidylcholine (PC) in vitro. May play a role in the biosynthesis of phospholipids. This is Acyl-CoA-binding domain-containing protein 2 from Oryza sativa subsp. japonica (Rice).